Consider the following 167-residue polypeptide: NAD(P)H-quinone oxidoreductase subunit I, chloroplastic (167 aa).

4Fe-4S ferredoxin-type domains lie at 55-84 and 95-124; these read GRIH…VDWK and LNYS…MTEE. Residues Cys64, Cys67, Cys70, Cys74, Cys104, Cys107, Cys110, and Cys114 each contribute to the [4Fe-4S] cluster site.

Belongs to the complex I 23 kDa subunit family. In terms of assembly, NDH is composed of at least 16 different subunits, 5 of which are encoded in the nucleus. [4Fe-4S] cluster serves as cofactor.

It localises to the plastid. It is found in the chloroplast thylakoid membrane. It catalyses the reaction a plastoquinone + NADH + (n+1) H(+)(in) = a plastoquinol + NAD(+) + n H(+)(out). It carries out the reaction a plastoquinone + NADPH + (n+1) H(+)(in) = a plastoquinol + NADP(+) + n H(+)(out). Its function is as follows. NDH shuttles electrons from NAD(P)H:plastoquinone, via FMN and iron-sulfur (Fe-S) centers, to quinones in the photosynthetic chain and possibly in a chloroplast respiratory chain. The immediate electron acceptor for the enzyme in this species is believed to be plastoquinone. Couples the redox reaction to proton translocation, and thus conserves the redox energy in a proton gradient. The chain is NAD(P)H-quinone oxidoreductase subunit I, chloroplastic from Aethionema cordifolium (Lebanon stonecress).